A 477-amino-acid chain; its full sequence is MMSRESQPGLHRQLSRRNMLAAMGLAGAAAVSLPVLSACGVGGRTNAPNGASEVTGGFDWRKASGSTINILQTPHPYQQSYQPLLKEFTELTGINVNVDLVPEADYFTKLNTELAGGTGKHDAFMLGAYFIWQYGPPGWIEDLNPWLQNSSATNAEYDFEDIFEGLRTSTRWDFELGNPLGTGGQWAIPWGFENNVVAYNKAYFDQRGITKLPDNFDDFIQLAIDLTDRSENRYGIATRGSKSWATIHPGFMTQYVREGAVDYTFDGTDLVAEMDSDKAVEFTRKWIEMQHKAGPTSWTTYDYPNATGDLGDGTAMMVYDADSATYPKNKPGASAQAGNLGWYPGPAGPDGNYKTNLWTWTWAMNANSRNKLPAWLFIQWATGKESMNKAVEGGIYADPVRQSVFDTTFKRIAADQHGYLETFETVIGSSKIQFTPQKKFFDTTKDWAVALQDIYGGDDAASRLRSLAKTNTSKVNL.

Positions 1-38 form a signal peptide, tat-type signal; that stretch reads MMSRESQPGLHRQLSRRNMLAAMGLAGAAAVSLPVLSA.

It belongs to the bacterial solute-binding protein 1 family. In terms of processing, predicted to be exported by the Tat system. The position of the signal peptide cleavage has not been experimentally proven.

Part of an ABC transporter complex involved in erythritol/L-threitol import. Binds erythritol and L-threitol. Functions in the transport for the degradation pathways of erythritol and L-threitol, that allow M.smegmatis to grow on these compounds as the sole carbon source. This is Erythritol/L-threitol-binding protein from Mycolicibacterium smegmatis (strain ATCC 700084 / mc(2)155) (Mycobacterium smegmatis).